A 158-amino-acid polypeptide reads, in one-letter code: Chromobox protein homolog 7 (158 aa).

One can recognise a Chromo domain in the interval F11–Y69. Residues K60–S124 form a disordered region. Residues G68 to R78 show a composition bias toward basic residues.

Component of a PRC1-like complex. Distinct PRC1-like core complexes are composed of a RING1 subunit (RING1B or RING1A), one of the six PCGF proteins (PCGF1-6), one PHC protein (PHC1-3) and one of the CBX proteins (CBX2, CBX4, CBX6, CBX7 or CBX8). The composition of the PRC1 complex may differ between the PRC1 complex in pluripotent embryonic stem cells containing RNF2, CBX7 and PCGF2, and the PRC1 complex in differentiating cells containing RNF2, CBX2, CBX4 and BMI1. Interacts with RING1. Interacts with RNF2/RING1B. Interacts with PCGF1, PCGF2, PCGF3, PCGF5 and PCGF6. Interacts (via chromodomain) with histone H3K9Me3 and H3K27me3. Interacts with H3K9Me2 and H4K20Me1. Interacts (via chromodomain) with single-stranded and double-stranded RNA; RNA binding seems to be required for the localization to chromatin.

The protein localises to the nucleus. Its subcellular location is the chromosome. In terms of biological role, component of a Polycomb group (PcG) multiprotein PRC1-like complex, a complex class required to maintain the transcriptionally repressive state of many genes, including Hox genes, throughout development. PcG PRC1 complex acts via chromatin remodeling and modification of histones; it mediates monoubiquitination of histone H2A 'Lys-119', rendering chromatin heritably changed in its expressibility. Promotes histone H3 trimethylation at 'Lys-9' (H3K9me3). Binds to histone H3 trimethylated 'Lys-9' (H3K9me3) or at 'Lys-27' (H3K27me3). May possibly also bind trimethylated lysine residues in other proteins (in vitro). Binds non-coding, single-stranded and double-stranded RNA. Plays a role in the timely repression of differentiation-specific genes in pluripotent embryonic stem cells to maintain the undifferentiated state. Regulator of cellular lifespan by maintaining the repression of CDKN2A, but not by inducing telomerase activity. The polypeptide is Chromobox protein homolog 7 (Cbx7) (Rattus norvegicus (Rat)).